The sequence spans 192 residues: uncharacterized protein (192 aa).

The disordered stretch occupies residues 168-192 (PLWRKSEAGSRKARTSNSGGPTKRA). The span at 182-192 (TSNSGGPTKRA) shows a compositional bias: polar residues.

The protein to A.xylinum IS1268 ORFA.

This is an uncharacterized protein from Sinorhizobium fredii (strain NBRC 101917 / NGR234).